A 470-amino-acid polypeptide reads, in one-letter code: Histone deacetylase HOS1 (470 aa).

The segment at Leu-47–Lys-392 is histone deacetylase. Position 110 is a phosphoserine (Ser-110). The active site involves His-211.

It belongs to the histone deacetylase family. HD type 1 subfamily.

It localises to the nucleus. It catalyses the reaction N(6)-acetyl-L-lysyl-[histone] + H2O = L-lysyl-[histone] + acetate. In terms of biological role, responsible for the deacetylation of lysine residues on the N-terminal part of the core histones (H2A, H2B, H3 and H4). Histone deacetylation plays an important role in transcriptional regulation, cell cycle progression and developmental events. Histone deacetylases act via the formation of large multiprotein complexes. The polypeptide is Histone deacetylase HOS1 (HOS1) (Saccharomyces cerevisiae (strain ATCC 204508 / S288c) (Baker's yeast)).